Consider the following 589-residue polypeptide: Coiled-coil domain-containing protein 22 homolog (589 aa).

2 coiled-coil regions span residues 287–426 and 523–589; these read KTPL…LQTK and CEEL…TSRQ. The disordered stretch occupies residues 568-589; the sequence is EMQNESQRLEESIRRMEVTSRQ. Positions 574 to 589 are enriched in basic and acidic residues; it reads QRLEESIRRMEVTSRQ.

The protein belongs to the CCDC22 family.

The chain is Coiled-coil domain-containing protein 22 homolog from Aedes aegypti (Yellowfever mosquito).